Reading from the N-terminus, the 42-residue chain is Photosystem II reaction center protein J (42 aa).

The chain crosses the membrane as a helical span at residues 10–30 (IPLWIIGTLAGTLVIGLLAIF).

Belongs to the PsbJ family. In terms of assembly, PSII is composed of 1 copy each of membrane proteins PsbA, PsbB, PsbC, PsbD, PsbE, PsbF, PsbH, PsbI, PsbJ, PsbK, PsbL, PsbM, PsbT, PsbX, PsbY, PsbZ, Psb30/Ycf12, at least 3 peripheral proteins of the oxygen-evolving complex and a large number of cofactors. It forms dimeric complexes.

Its subcellular location is the plastid. It is found in the chloroplast thylakoid membrane. Its function is as follows. One of the components of the core complex of photosystem II (PSII). PSII is a light-driven water:plastoquinone oxidoreductase that uses light energy to abstract electrons from H(2)O, generating O(2) and a proton gradient subsequently used for ATP formation. It consists of a core antenna complex that captures photons, and an electron transfer chain that converts photonic excitation into a charge separation. The protein is Photosystem II reaction center protein J of Chaetosphaeridium globosum (Charophycean green alga).